The chain runs to 543 residues: Plant intracellular Ras-group-related LRR protein 5 (543 aa).

LRR repeat units follow at residues 239–262 (LQDVTELDLSENRIMALPSTIGSL), 264–284 (YLTKLDLHSNQLINLPDAFGE), 285–307 (LSNLIDLDLHANQLKSLPSSFGN), 309–331 (TSLANLDLSSNMLKALPDCLGKL), 332–354 (ANLRRLIVETNELEELPYTIGSC), 356–377 (SLVELRLDFNQLKALPEAIGKL), 378–400 (EKLEILTLHYNRIKGLPTTVGSL), 402–424 (RLRELDVSFNEVEVIPENICFAT), 426–448 (LVKLNLSRNFADLRALPKSIGNL), and 449–470 (EMLEELDISSNQIRVLPDSFRC). An LRR 11; degenerate repeat occupies 472–494 (SRLRVFHADETPLEFPPREVVKL). Residues 495–502 (GAQAVVKY) carry the GVYW; degenerate motif.

It belongs to the SHOC2 family. As to expression, widely expressed.

In terms of biological role, leucine-rich repeat protein that likely mediates protein interactions, possibly in the context of signal transduction. The chain is Plant intracellular Ras-group-related LRR protein 5 (IRL5) from Oryza sativa subsp. japonica (Rice).